The chain runs to 37 residues: Large ribosomal subunit protein bL36c (37 aa).

It belongs to the bacterial ribosomal protein bL36 family.

Its subcellular location is the plastid. The protein resides in the chloroplast. The protein is Large ribosomal subunit protein bL36c of Thalassiosira pseudonana (Marine diatom).